The primary structure comprises 1001 residues: Chloride channel protein clh-3 (1001 aa).

Residues 1–48 (MGIGTKILSKIEKNKTSDGLTIPLTPTTQKQSSSWCSFESIKTFFRTV) lie on the Cytoplasmic side of the membrane. Helical transmembrane passes span 49–85 (IRDW…RLFD) and 91–117 (HFTL…AHYI). Positions 123 to 127 (GSGIP) match the Selectivity filter part_1 motif. Ser-124 serves as a coordination point for chloride. Residues 126–133 (IPEMKTIL) constitute an intramembrane region (helical). A run of 2 helical transmembrane segments spans residues 142 to 160 (LSVR…SLGS) and 167 to 185 (EGPF…TRLV). Positions 165-169 (GKEGP) match the Selectivity filter part_2 motif. Intramembrane regions (helical) lie at residues 202–214 (MLAA…VACT) and 218–226 (PIGGVLFSI). 5 helical membrane-spanning segments follow: residues 238–258 (YWRG…LRMF), 285–313 (LPIF…VLFL), 322–341 (IFQK…ISSL), 405–425 (YSPF…AILA), and 433–456 (GIFM…VFSL). Residues 433-437 (GIFMP) carry the Selectivity filter part_3 motif. Chloride contacts are provided by Ile-434 and Phe-435. Residues 473 to 487 (GVYAVVGAAAFCGAV) constitute an intramembrane region (helical). Residues 488 to 489 (TH) constitute an intramembrane region (note=Loop between two helices). Residues 490–501 (TVSVAVIVFELT) constitute an intramembrane region (helical). Residues 502-506 (GQLCH) constitute an intramembrane region (note=Loop between two helices). The helical transmembrane segment at 507–524 (LLPVMIAVLIANAVASYL) threads the bilayer. Topologically, residues 525–1001 (QPSIYDSIIR…LPDDVHDEKF (477 aa)) are cytoplasmic. Tyr-529 contributes to the chloride binding site. Residues 560–619 (MISPLVYIAKDSTVGDIKRALETKTRIRAFPLVENMESLALVGSVSRSQLQRYVDSQIGT) form the CBS 1 domain. Positions 625–657 (EATRRIKQRLEDEESERKRREESKSDDTEDSLE) form a coiled coil. Positions 634–650 (LEDEESERKRREESKSD) are enriched in basic and acidic residues. A disordered region spans residues 634 to 662 (LEDEESERKRREESKSDDTEDSLETTGAG). Ser-742 and Ser-747 each carry phosphoserine; by gck-3. A CBS 2 domain is found at 788 to 845 (IDSTPFQLSEYTSLFKAHSLFSLLGLNRAYVTKKGQLIGVVALKELRLAIEYLQSGKV).

It belongs to the chloride channel (TC 2.A.49) family. Isoform a interacts (via RFLI motif) with gck-3 (via C-terminus). In terms of processing, phosphorylated by gck-3; phosphorylation at both Ser-742 and Ser-747 is required to inhibit channel activity. Dephosphorylated by gsp-1/2 during cell swelling and oocyte meiotic maturation, which results in channel activation. As to expression, expressed in excretory cell, 4 anterior epithelial cells of the intestine, hermaphrodite-specific neurons and enteric muscles. Expressed also in vulva and uterus. Isoform a is expressed in oocytes (at protein level).

Its subcellular location is the cell membrane. Its function is as follows. Voltage-gated chloride channel. Insensitive to depolarizing conditioning voltages, requires low voltages for activation, insensitive to chloride levels and has a mild sensitivity to low pH. Channel gating properties are conferred by the cytoplasmic C-terminus. Plays a role in egg laying by modulating hermaphrodite-specific neurons (HSN) excitability and the ovulatory contractions of gap-junction-coupled gonadal sheath cells. When active, may prevent tubular formation of the excretory canals. Activated during oocyte meiotic maturation and by membrane hyperpolarization and cell swelling. Inhibited by Zn(2+) and to a lesser extent by Cd(2+). Voltage-gated chloride channel. Sensitive to depolarizing conditioning voltages, requires stronger voltages for activation and activation is slower, is inhibited by low concentrations of chloride and is activated by low pH. Channel gating properties are conferred by the cytoplasmic C-terminus. This Caenorhabditis elegans protein is Chloride channel protein clh-3.